The sequence spans 450 residues: Adenylosuccinate lyase (450 aa).

N(6)-(1,2-dicarboxyethyl)-AMP contacts are provided by residues 9–10 (RY), 75–77 (HHD), and 101–102 (TS). The active-site Proton donor/acceptor is the histidine 149. N(6)-(1,2-dicarboxyethyl)-AMP is bound at residue glutamine 223. The active-site Proton donor/acceptor is serine 273. Residues serine 274, 279–281 (KRN), and 318–322 (SVERV) each bind N(6)-(1,2-dicarboxyethyl)-AMP.

It belongs to the lyase 1 family. Adenylosuccinate lyase subfamily. In terms of assembly, homotetramer. Residues from neighboring subunits contribute catalytic and substrate-binding residues to each active site.

It carries out the reaction N(6)-(1,2-dicarboxyethyl)-AMP = fumarate + AMP. The enzyme catalyses (2S)-2-[5-amino-1-(5-phospho-beta-D-ribosyl)imidazole-4-carboxamido]succinate = 5-amino-1-(5-phospho-beta-D-ribosyl)imidazole-4-carboxamide + fumarate. It functions in the pathway purine metabolism; AMP biosynthesis via de novo pathway; AMP from IMP: step 2/2. The protein operates within purine metabolism; IMP biosynthesis via de novo pathway; 5-amino-1-(5-phospho-D-ribosyl)imidazole-4-carboxamide from 5-amino-1-(5-phospho-D-ribosyl)imidazole-4-carboxylate: step 2/2. Its function is as follows. Catalyzes two reactions in de novo purine nucleotide biosynthesis. Catalyzes the breakdown of 5-aminoimidazole- (N-succinylocarboxamide) ribotide (SAICAR or 2-[5-amino-1-(5-phospho-beta-D-ribosyl)imidazole-4-carboxamido]succinate) to 5-aminoimidazole-4-carboxamide ribotide (AICAR or 5-amino-1-(5-phospho-beta-D-ribosyl)imidazole-4-carboxamide) and fumarate, and of adenylosuccinate (ADS or N(6)-(1,2-dicarboxyethyl)-AMP) to adenosine monophosphate (AMP) and fumarate. This chain is Adenylosuccinate lyase (purB), found in Pyrococcus horikoshii (strain ATCC 700860 / DSM 12428 / JCM 9974 / NBRC 100139 / OT-3).